Here is a 626-residue protein sequence, read N- to C-terminus: Transketolase-like protein 2 (626 aa).

Position 37 (His37) interacts with substrate. Thiamine diphosphate is bound by residues Ser40, His77, and 123–125 (GSL). Residue Asp155 coordinates Mg(2+). Gly156 and Asn185 together coordinate thiamine diphosphate. Mg(2+)-binding residues include Asn185 and Leu187. The thiamine diphosphate site is built by Lys247 and His261. Substrate is bound by residues His261 and Ser348. Residues Glu369 and Phe395 each contribute to the thiamine diphosphate site. Glu369 functions as the Proton donor in the catalytic mechanism. Positions 419 and 427 each coordinate substrate. Gln431 is a thiamine diphosphate binding site. Arg477 serves as a coordination point for substrate.

It belongs to the transketolase family. Homodimer. The cofactor is Mg(2+). Ca(2+) is required as a cofactor. Requires Mn(2+) as cofactor. Co(2+) serves as cofactor. It depends on thiamine diphosphate as a cofactor.

It catalyses the reaction D-sedoheptulose 7-phosphate + D-glyceraldehyde 3-phosphate = aldehydo-D-ribose 5-phosphate + D-xylulose 5-phosphate. Functionally, plays an essential role in total transketolase activity and cell proliferation in cancer cells; after transfection with anti-TKTL1 siRNA, total transketolase activity dramatically decreases and proliferation was significantly inhibited in cancer cells. Plays a pivotal role in carcinogenesis. In Bos taurus (Bovine), this protein is Transketolase-like protein 2 (TKTL2).